The primary structure comprises 248 residues: 2,3-bisphosphoglycerate-dependent phosphoglycerate mutase (248 aa).

Substrate-binding positions include 8 to 15 (RHGESQWN), 21 to 22 (TG), R60, 87 to 90 (ERHY), K98, 114 to 115 (RR), and 183 to 184 (GN). Residue H9 is the Tele-phosphohistidine intermediate of the active site. E87 serves as the catalytic Proton donor/acceptor.

Belongs to the phosphoglycerate mutase family. BPG-dependent PGAM subfamily. As to quaternary structure, homodimer.

It carries out the reaction (2R)-2-phosphoglycerate = (2R)-3-phosphoglycerate. It functions in the pathway carbohydrate degradation; glycolysis; pyruvate from D-glyceraldehyde 3-phosphate: step 3/5. Catalyzes the interconversion of 2-phosphoglycerate and 3-phosphoglycerate. The protein is 2,3-bisphosphoglycerate-dependent phosphoglycerate mutase of Alteromonas mediterranea (strain DSM 17117 / CIP 110805 / LMG 28347 / Deep ecotype).